The following is a 976-amino-acid chain: Ephrin type-A receptor 2 (976 aa).

A signal peptide spans 1–23 (MELWAARACFVLLWGCALAPATA). The tract at residues 1 to 206 (MELWAARACF…YYKKCPELLQ (206 aa)) is mediates interaction with CLDN4. Residues 25–537 (QGKEVVLLDF…SPEGSGSLAV (513 aa)) are Extracellular-facing. The Eph LBD domain occupies 28–206 (EVVLLDFAAA…YYKKCPELLQ (179 aa)). Disulfide bonds link cysteine 70–cysteine 188 and cysteine 105–cysteine 115. Residues 328–432 (PPSAPHYLTA…TSRSFRTASV (105 aa)) form the Fibronectin type-III 1 domain. 2 N-linked (GlcNAc...) asparagine glycosylation sites follow: asparagine 407 and asparagine 435. Positions 438–529 (EPPKVRLEGR…KVHEFQTLSP (92 aa)) constitute a Fibronectin type-III 2 domain. A helical transmembrane segment spans residues 538 to 558 (IGGVAVCVVLLLLLAGAGFFI). Residues 559-976 (HRRRKNLRAR…DQVNTVGIPI (418 aa)) are Cytoplasmic-facing. A Phosphoserine modification is found at serine 570. A Phosphotyrosine modification is found at tyrosine 575. A Phosphoserine modification is found at serine 579. Position 588 is a phosphotyrosine; by autocatalysis (tyrosine 588). Tyrosine 594 bears the Phosphotyrosine mark. Residues 606–906 (TEIHPSCVTR…STSGSEGVPF (301 aa)) form a mediates interaction with ARHGEF16 region. The Protein kinase domain occupies 613–875 (VTRQKVIGAG…DIVSILDKLI (263 aa)). 619–627 (IGAGEFGEV) is an ATP binding site. Tyrosine 628 carries the post-translational modification Phosphotyrosine. Lysine 646 serves as a coordination point for ATP. Threonine 647 bears the Phosphothreonine mark. A Phosphotyrosine; by autocatalysis modification is found at tyrosine 735. Aspartate 739 (proton acceptor) is an active-site residue. A Phosphotyrosine modification is found at tyrosine 772. Residues serine 869, serine 892, serine 897, and serine 901 each carry the phosphoserine modification. Positions 886 to 976 (DFDPRVSIRL…DQVNTVGIPI (91 aa)) are negatively regulates interaction with ARHGEF16. In terms of domain architecture, SAM spans 904–968 (VPFRTVSEWL…AYSLLGLKDQ (65 aa)). The residue at position 921 (tyrosine 921) is a Phosphotyrosine; by autocatalysis. The residue at position 930 (tyrosine 930) is a Phosphotyrosine. The short motif at 974–976 (IPI) is the PDZ-binding element.

This sequence belongs to the protein kinase superfamily. Tyr protein kinase family. Ephrin receptor subfamily. In terms of assembly, homodimer. Interacts with SLA. Interacts (phosphorylated form) with VAV2, VAV3 and PI3-kinase p85 subunit (PIK3R1, PIK3R2 or PIK3R3); critical for the EFNA1-induced activation of RAC1 which stimulates cell migration. Interacts with INPPL1; regulates activated EPHA2 endocytosis and degradation. Interacts (inactivated form) with PTK2/FAK1 and interacts (EFNA1 ligand-activated form) with PTPN11; regulates integrin-mediated adhesion. Interacts with ARHGEF16, DOCK4 and ELMO2; mediates ligand-independent activation of RAC1 which stimulates cell migration. Interacts with CLDN4; phosphorylates CLDN4 and may regulate tight junctions. Interacts with ACP1. Interacts with ANKS1A. Interacts with CEMIP. Interacts with NCK1; may regulate EPHA2 activity in cell migration and adhesion. Interacts with TIMD4. In terms of processing, autophosphorylates. Phosphorylated on tyrosine upon binding and activation by EFNA1. Phosphorylated residues Tyr-588 and Tyr-594 are required for binding VAV2 and VAV3 while phosphorylated residues Tyr-735 and Tyr-930 are required for binding PI3-kinase p85 subunit (PIK3R1, PIK3R2 or PIK3R3). These phosphorylated residues are critical for recruitment of VAV2 and VAV3 and PI3-kinase p85 subunit which transduce downstream signaling to activate RAC1 GTPase and cell migration. Dephosphorylation of Tyr-930 by PTPRF prevents the interaction of EPHA2 with NCK1. Phosphorylated at Ser-897 by PKB; serum-induced phosphorylation which targets EPHA2 to the cell leading edge and stimulates cell migration. Phosphorylation by PKB is inhibited by EFNA1-activated EPHA2 which regulates PKB activity via a reciprocal regulatory loop. Phosphorylated at Ser-897 in response to TNF by RPS6KA1 and RPS6KA3; RPS6KA-EPHA2 signaling pathway controls cell migration. Phosphorylated at Ser-897 by PKA; blocks cell retraction induced by EPHA2 kinase activity. Dephosphorylated by ACP1. Post-translationally, ubiquitinated by CHIP/STUB1. Ubiquitination is regulated by the HSP90 chaperone and regulates the receptor stability and activity through proteasomal degradation. ANKS1A prevents ubiquitination and degradation.

Its subcellular location is the cell membrane. It is found in the cell projection. It localises to the ruffle membrane. The protein resides in the lamellipodium membrane. The protein localises to the cell junction. Its subcellular location is the focal adhesion. It catalyses the reaction L-tyrosyl-[protein] + ATP = O-phospho-L-tyrosyl-[protein] + ADP + H(+). Its function is as follows. Receptor tyrosine kinase which binds promiscuously membrane-bound ephrin-A family ligands residing on adjacent cells, leading to contact-dependent bidirectional signaling into neighboring cells. The signaling pathway downstream of the receptor is referred to as forward signaling while the signaling pathway downstream of the ephrin ligand is referred to as reverse signaling. Activated by the ligand ephrin-A1/EFNA1 regulates migration, integrin-mediated adhesion, proliferation and differentiation of cells. Regulates cell adhesion and differentiation through DSG1/desmoglein-1 and inhibition of the ERK1/ERK2 signaling pathway. May also participate in UV radiation-induced apoptosis and have a ligand-independent stimulatory effect on chemotactic cell migration. During development, may function in distinctive aspects of pattern formation and subsequently in development of several fetal tissues. Involved for instance in angiogenesis, in early hindbrain development and epithelial proliferation and branching morphogenesis during mammary gland development. Engaged by the ligand ephrin-A5/EFNA5 may regulate lens fiber cells shape and interactions and be important for lens transparency development and maintenance. With ephrin-A2/EFNA2 may play a role in bone remodeling through regulation of osteoclastogenesis and osteoblastogenesis. This is Ephrin type-A receptor 2 (EPHA2) from Macaca fascicularis (Crab-eating macaque).